The primary structure comprises 234 residues: ATP-dependent dethiobiotin synthetase BioD (234 aa).

12–17 is a binding site for ATP; that stretch reads DVGKTF. Threonine 16 provides a ligand contact to Mg(2+). Lysine 37 is a catalytic residue. Serine 41 lines the substrate pocket. ATP is bound by residues aspartate 52, 118–121, and 178–179; these read EGAG and SQ. The Mg(2+) site is built by aspartate 52 and glutamate 118.

Belongs to the dethiobiotin synthetase family. In terms of assembly, homodimer. It depends on Mg(2+) as a cofactor.

Its subcellular location is the cytoplasm. It carries out the reaction (7R,8S)-7,8-diammoniononanoate + CO2 + ATP = (4R,5S)-dethiobiotin + ADP + phosphate + 3 H(+). It participates in cofactor biosynthesis; biotin biosynthesis; biotin from 7,8-diaminononanoate: step 1/2. Catalyzes a mechanistically unusual reaction, the ATP-dependent insertion of CO2 between the N7 and N8 nitrogen atoms of 7,8-diaminopelargonic acid (DAPA, also called 7,8-diammoniononanoate) to form a ureido ring. The sequence is that of ATP-dependent dethiobiotin synthetase BioD from Phenylobacterium zucineum (strain HLK1).